The primary structure comprises 236 residues: Virion protein US10 homolog (236 aa).

The tract at residues 1 to 32 (MDGAYGHVHNGSPMAVDGEESGAGTGTGAGAD) is disordered. Residues 21–31 (SGAGTGTGAGA) are compositionally biased toward gly residues. Residues 138 to 150 (CAYWCCLGHAFAC) fold into a zinc finger.

Belongs to the herpesviridae US10 family. Post-translationally, phosphorylated.

Its subcellular location is the virion tegument. The protein resides in the host nucleus matrix. The sequence is that of Virion protein US10 homolog from Equine herpesvirus 1 (strain Ab4p) (EHV-1).